The primary structure comprises 688 residues: Probable glucan endo-1,3-beta-glucosidase btgC (688 aa).

Disordered regions lie at residues 1-91 (MSGP…NLGP), 126-148 (ANIP…PEPP), and 168-195 (GQLT…IPYQ). At 1-307 (MSGPNRTYSF…PKPGGGNKKR (307 aa)) the chain is on the cytoplasmic side. Residues 175–188 (SVSHLSSTNPSQRN) are compositionally biased toward polar residues. The helical; Signal-anchor for type II membrane protein transmembrane segment at 308–328 (GWIVGAILAFIIIGAIVGGAV) threads the bilayer. At 329–688 (GGTIGHRGNE…IPDCGGKTAT (360 aa)) the chain is on the extracellular side. Residues 334 to 363 (HRGNEEPSSASSASSSSTQTATEDTSVNGD) form a disordered region. Residues 341 to 355 (SSASSASSSSTQTAT) show a composition bias toward low complexity. N-linked (GlcNAc...) asparagine glycans are attached at residues Asn408, Asn431, and Asn459. Glu491 serves as the catalytic Proton donor. Glu590 (nucleophile) is an active-site residue. Asn609 and Asn635 each carry an N-linked (GlcNAc...) asparagine glycan.

It belongs to the glycosyl hydrolase 17 family.

It is found in the cell membrane. The enzyme catalyses Hydrolysis of (1-&gt;3)-beta-D-glucosidic linkages in (1-&gt;3)-beta-D-glucans.. Glucanases play a role in cell expansion during growth, in cell-cell fusion during mating, and in spore release during sporulation. This enzyme may be involved in beta-glucan degradation. Active on laminarin and lichenan. The protein is Probable glucan endo-1,3-beta-glucosidase btgC (btgC) of Aspergillus fumigatus (strain ATCC MYA-4609 / CBS 101355 / FGSC A1100 / Af293) (Neosartorya fumigata).